Here is a 294-residue protein sequence, read N- to C-terminus: Protein C3orf33 homolog (294 aa).

An N-acetylalanine modification is found at Ala2. Residues 36-53 form a helical membrane-spanning segment; that stretch reads LVQNISTGMAIAGIMLLI. The segment at 244–271 is disordered; it reads KPAGADLGSTKDSYHDSRRRASGKGKDS.

The protein localises to the membrane. Functionally, may play a role in transcription regulation. The chain is Protein C3orf33 homolog from Mus musculus (Mouse).